The primary structure comprises 77 residues: Acyl carrier protein (77 aa).

Residues 1–76 (MATFDDVKAV…DVVNYIDNLK (76 aa)) enclose the Carrier domain. Residue S36 is modified to O-(pantetheine 4'-phosphoryl)serine.

Belongs to the acyl carrier protein (ACP) family. 4'-phosphopantetheine is transferred from CoA to a specific serine of apo-ACP by AcpS. This modification is essential for activity because fatty acids are bound in thioester linkage to the sulfhydryl of the prosthetic group.

It is found in the cytoplasm. Its pathway is lipid metabolism; fatty acid biosynthesis. Functionally, carrier of the growing fatty acid chain in fatty acid biosynthesis. This Campylobacter jejuni subsp. jejuni serotype O:6 (strain 81116 / NCTC 11828) protein is Acyl carrier protein.